The chain runs to 127 residues: Cyclin-dependent protein kinase inhibitor SIM (127 aa).

The tract at residues 21 to 71 (RANTNRDDDGGGCTTPTSSDHKIPPTTATTPPPPPQKPRPPSTPSSLGIRS) is disordered. Pro residues predominate over residues 50–63 (TPPPPPQKPRPPST).

As to quaternary structure, interacts with CDKA-1. Interacts with CYCD2-1, CYCD3-2 and CYCD4-1. Interacts with CDKB1-1. Interacts with CPR5. Expressed in the shoot apical meristem, leaf primordia and the elongation zone of the root.

It is found in the nucleus. Functionally, cyclin-dependent protein kinase (CDK) inhibitor that functions as a repressor of mitosis in the endoreduplication cell cycle. Inhibits the kinase activity of CYCD3-1/CDKA-1, CYCD2-1/CDKA-1 and CYCB1-1/CDKB1-1 complexes in a dose dependent manner. Cooperates with SMR1 and SMR2 to promote endoreplication during leaf development. Required for normal trichome endoreplicating cell cycles. Positive regulator of effector-triggered immunity (ETI). In Arabidopsis thaliana (Mouse-ear cress), this protein is Cyclin-dependent protein kinase inhibitor SIM.